The sequence spans 346 residues: c-di-GMP synthase (346 aa).

Belongs to the CD-NTase family.

The enzyme catalyses 2 GTP = 3',3'-c-di-GMP + 2 diphosphate. Functionally, cyclic nucleotide synthase (second messenger synthase) of a CBASS antivirus system. CBASS (cyclic oligonucleotide-based antiphage signaling system) provides immunity against bacteriophage. The CD-NTase protein synthesizes cyclic nucleotides in response to infection; these serve as specific second messenger signals. The signals activate a diverse range of effectors, leading to bacterial cell death and thus abortive phage infection. A type I-D(GG) CBASS system. In terms of biological role, cyclic dinucleotide synthase that catalyzes the synthesis of c-di-GMP, has no activity with other NTP substrates. This Lachnospiraceae bacterium (strain RUG226) protein is c-di-GMP synthase.